The following is a 695-amino-acid chain: Elongation factor G (695 aa).

A tr-type G domain is found at 8–282 (EKTRNIGIMA…AVLDYLPAPT (275 aa)). Residues 17-24 (AHIDAGKT), 81-85 (DTPGH), and 135-138 (NKMD) each bind GTP.

The protein belongs to the TRAFAC class translation factor GTPase superfamily. Classic translation factor GTPase family. EF-G/EF-2 subfamily.

The protein resides in the cytoplasm. Catalyzes the GTP-dependent ribosomal translocation step during translation elongation. During this step, the ribosome changes from the pre-translocational (PRE) to the post-translocational (POST) state as the newly formed A-site-bound peptidyl-tRNA and P-site-bound deacylated tRNA move to the P and E sites, respectively. Catalyzes the coordinated movement of the two tRNA molecules, the mRNA and conformational changes in the ribosome. The protein is Elongation factor G of Listeria innocua serovar 6a (strain ATCC BAA-680 / CLIP 11262).